The primary structure comprises 184 residues: MSCRSEHIWIQPITGSRKTSNLCWAIILFLGSLGFLLVGTSSYLGRNLISLFPSQQILFFPQGIVMSFYGIAGLFISSYLWCTISWNVGGGYDRFDRKEGMVCLFRWGFPGKNRRIFLRFLIKDIQSVRIEVKEGIYARRVLYMDIRGQGAIPLTRTDENVTPREIEQKAAELAYFLRVPIEVF.

The next 2 helical transmembrane spans lie at 22 to 42 and 57 to 77; these read LCWA…GTSS and ILFF…LFIS.

Belongs to the Ycf4 family.

Its subcellular location is the plastid. It localises to the chloroplast thylakoid membrane. In terms of biological role, seems to be required for the assembly of the photosystem I complex. The polypeptide is Photosystem I assembly protein Ycf4 (Daucus carota (Wild carrot)).